A 165-amino-acid chain; its full sequence is Cytochrome b6-f complex subunit 4 (165 aa).

3 helical membrane passes run 36 to 56, 95 to 115, and 131 to 151; these read LLYI…GLAV, LLGV…PFLE, and TVFL…TLPI.

Belongs to the cytochrome b family. PetD subfamily. As to quaternary structure, the 4 large subunits of the cytochrome b6-f complex are cytochrome b6, subunit IV (17 kDa polypeptide, petD), cytochrome f and the Rieske protein, while the 4 small subunits are petG, petL, petM and petN. The complex functions as a dimer.

The protein localises to the plastid. It localises to the chloroplast thylakoid membrane. Component of the cytochrome b6-f complex, which mediates electron transfer between photosystem II (PSII) and photosystem I (PSI), cyclic electron flow around PSI, and state transitions. In Populus alba (White poplar), this protein is Cytochrome b6-f complex subunit 4.